The primary structure comprises 307 residues: Elongation factor Ts (307 aa).

The tract at residues 80–83 (TDFV) is involved in Mg(2+) ion dislocation from EF-Tu.

This sequence belongs to the EF-Ts family.

It is found in the cytoplasm. Its function is as follows. Associates with the EF-Tu.GDP complex and induces the exchange of GDP to GTP. It remains bound to the aminoacyl-tRNA.EF-Tu.GTP complex up to the GTP hydrolysis stage on the ribosome. This Clostridium botulinum (strain 657 / Type Ba4) protein is Elongation factor Ts.